A 614-amino-acid polypeptide reads, in one-letter code: Putative ABC transporter ATP-binding protein MA_1747 (614 aa).

ABC transporter domains lie at 11–251 (VRLE…KLGI) and 319–552 (VLIE…AGLL). Residues 45-52 (GPSGCGKS) and 352-359 (GHNGAGKT) contribute to the ATP site.

This sequence belongs to the ABC transporter superfamily.

Its subcellular location is the cell membrane. Its function is as follows. Probably part of an ABC transporter complex. Responsible for energy coupling to the transport system. The protein is Putative ABC transporter ATP-binding protein MA_1747 of Methanosarcina acetivorans (strain ATCC 35395 / DSM 2834 / JCM 12185 / C2A).